The sequence spans 163 residues: MSFNCSTRNCSSRPIGGRCIVPVAQVTTTSTTDADCLGGICLPSSFQTGSWLLDHCQETCCEPTACQPTCYRRTSCVSNPCQVTCSRQTTCISNPCSTTYSRPLTFVSSGCQPLGGISSVCQPVGGISTVCQPVGGVSTVCQPACGVSRTYQQSCVSSCRRTC.

4 tandem repeats follow at residues 111 to 120 (CQPLGGISSV), 121 to 130 (CQPVGGISTV), 131 to 140 (CQPVGGVSTV), and 141 to 150 (CQPACGVSRT). Residues 111–150 (CQPLGGISSVCQPVGGISTVCQPVGGVSTVCQPACGVSRT) are 4 X 10 AA approximate repeats.

It belongs to the PMG family. Expressed in the upper matrix and in the entire hair cortex.

Functionally, in the hair cortex, hair keratin intermediate filaments are embedded in an interfilamentous matrix, consisting of hair keratin-associated proteins (KRTAP), which are essential for the formation of a rigid and resistant hair shaft through their extensive disulfide bond cross-linking with abundant cysteine residues of hair keratins. The matrix proteins include the high-sulfur and high-glycine-tyrosine keratins. In Homo sapiens (Human), this protein is Keratin-associated protein 11-1 (KRTAP11-1).